The chain runs to 654 residues: Translation factor GUF1, mitochondrial (654 aa).

The tr-type G domain occupies 57–237 (ENYRNFSIVA…SVIKNIPSPV (181 aa)). Residues 66–73 (AHVDHGKS), 130–134 (DTPGH), and 184–187 (NKID) each bind GTP.

Belongs to the TRAFAC class translation factor GTPase superfamily. Classic translation factor GTPase family. LepA subfamily.

The protein localises to the mitochondrion inner membrane. It carries out the reaction GTP + H2O = GDP + phosphate + H(+). Promotes mitochondrial protein synthesis. May act as a fidelity factor of the translation reaction, by catalyzing a one-codon backward translocation of tRNAs on improperly translocated ribosomes. Binds to mitochondrial ribosomes in a GTP-dependent manner. The sequence is that of Translation factor GUF1, mitochondrial from Candida albicans (strain SC5314 / ATCC MYA-2876) (Yeast).